Here is a 560-residue protein sequence, read N- to C-terminus: IQ motif and ankyrin repeat domain-containing protein 1 (560 aa).

Residues 1-72 (MDSKKGRPKA…DRAARAIQGA (72 aa)) form a disordered region. The region spanning 62 to 91 (EDRAARAIQGAFRQLRARRELARRREERRE) is the IQ domain. 2 ANK repeats span residues 191 to 223 (YGNT…SKGA) and 224 to 253 (FGPT…DPRV). A coiled-coil region spans residues 281–398 (LTEAMLQNME…RLELREQTQE (118 aa)).

The protein is IQ motif and ankyrin repeat domain-containing protein 1 of Homo sapiens (Human).